The following is a 399-amino-acid chain: L-2-hydroxyglutarate dehydrogenase (399 aa).

The protein belongs to the L2HGDH family. FAD serves as cofactor.

The enzyme catalyses (S)-2-hydroxyglutarate + A = 2-oxoglutarate + AH2. Functionally, catalyzes the dehydrogenation of L-2-hydroxyglutarate (L2HG or(S)-2-hydroxyglutarate) to 2-oxoglutarate (alpha-ketoglutarate). Active in vitro with the artificial electron acceptor 2,6-dichlorophenolindophenol (DCPIP). Also displays a very low oxidase activity in vitro on L-2-hydroxyglutarate with O2 as the electron acceptor, but this activity is most likely not physiological. The sequence is that of L-2-hydroxyglutarate dehydrogenase from Indibacter alkaliphilus (strain CCUG 57479 / KCTC 22604 / LW1).